The following is a 75-amino-acid chain: Cytochrome c oxidase subunit 6C (75 aa).

At 1 to 13 (MAPEVLPKPQMRG) the chain is on the mitochondrial matrix side. The chain crosses the membrane as a helical span at residues 14-54 (LLAKRLRFHMVTAFVLSLGVAALYKFRVADKRKKAYADFYR). The Mitochondrial intermembrane segment spans residues 55 to 75 (NYDAMKDFEEMRKAGIFQSVK).

It belongs to the cytochrome c oxidase subunit 6c family. In terms of assembly, component of the cytochrome c oxidase (complex IV, CIV), a multisubunit enzyme composed of 14 subunits. The complex is composed of a catalytic core of 3 subunits MT-CO1, MT-CO2 and MT-CO3, encoded in the mitochondrial DNA, and 11 supernumerary subunits COX4I, COX5A, COX5B, COX6A, COX6B, COX6C, COX7A, COX7B, COX7C, COX8 and NDUFA4, which are encoded in the nuclear genome. The complex exists as a monomer or a dimer and forms supercomplexes (SCs) in the inner mitochondrial membrane with NADH-ubiquinone oxidoreductase (complex I, CI) and ubiquinol-cytochrome c oxidoreductase (cytochrome b-c1 complex, complex III, CIII), resulting in different assemblies (supercomplex SCI(1)III(2)IV(1) and megacomplex MCI(2)III(2)IV(2)).

It is found in the mitochondrion inner membrane. The protein operates within energy metabolism; oxidative phosphorylation. In terms of biological role, component of the cytochrome c oxidase, the last enzyme in the mitochondrial electron transport chain which drives oxidative phosphorylation. The respiratory chain contains 3 multisubunit complexes succinate dehydrogenase (complex II, CII), ubiquinol-cytochrome c oxidoreductase (cytochrome b-c1 complex, complex III, CIII) and cytochrome c oxidase (complex IV, CIV), that cooperate to transfer electrons derived from NADH and succinate to molecular oxygen, creating an electrochemical gradient over the inner membrane that drives transmembrane transport and the ATP synthase. Cytochrome c oxidase is the component of the respiratory chain that catalyzes the reduction of oxygen to water. Electrons originating from reduced cytochrome c in the intermembrane space (IMS) are transferred via the dinuclear copper A center (CU(A)) of subunit 2 and heme A of subunit 1 to the active site in subunit 1, a binuclear center (BNC) formed by heme A3 and copper B (CU(B)). The BNC reduces molecular oxygen to 2 water molecules using 4 electrons from cytochrome c in the IMS and 4 protons from the mitochondrial matrix. The polypeptide is Cytochrome c oxidase subunit 6C (COX6C) (Trachypithecus cristatus (Silvered leaf-monkey)).